The primary structure comprises 584 residues: Actin-binding protein IPP (584 aa).

Positions 37–104 (CDVQLQVGKE…IYTGVVNIAV (68 aa)) constitute a BTB domain. Kelch repeat units follow at residues 296–343 (YTRL…VVGG), 344–390 (MVYA…VCYG), 391–437 (AIYA…EMQG), 439–485 (IYAV…ALND), 487–533 (IYAI…TVNG), and 535–583 (LYVS…GVAV).

In terms of tissue distribution, expression seems confined to tissues derived from trophectoderm and primitive endoderm.

The protein localises to the cytoplasm. The protein resides in the cytoskeleton. Its function is as follows. May play a role in organizing the actin cytoskeleton. The polypeptide is Actin-binding protein IPP (Ipp) (Mus musculus (Mouse)).